Here is a 179-residue protein sequence, read N- to C-terminus: tRNA (cytidine(56)-2'-O)-methyltransferase (179 aa).

L84 contributes to the S-adenosyl-L-methionine binding site.

Belongs to the aTrm56 family. Homodimer.

The protein localises to the cytoplasm. It catalyses the reaction cytidine(56) in tRNA + S-adenosyl-L-methionine = 2'-O-methylcytidine(56) in tRNA + S-adenosyl-L-homocysteine + H(+). Functionally, specifically catalyzes the AdoMet-dependent 2'-O-ribose methylation of cytidine at position 56 in tRNAs. This chain is tRNA (cytidine(56)-2'-O)-methyltransferase, found in Methanothermobacter thermautotrophicus (strain ATCC 29096 / DSM 1053 / JCM 10044 / NBRC 100330 / Delta H) (Methanobacterium thermoautotrophicum).